The sequence spans 311 residues: Ribosomal RNA small subunit methyltransferase H (311 aa).

S-adenosyl-L-methionine is bound by residues 35–37 (GGH), Asp-55, Phe-80, Asp-102, and Gln-109.

Belongs to the methyltransferase superfamily. RsmH family.

The protein resides in the cytoplasm. The enzyme catalyses cytidine(1402) in 16S rRNA + S-adenosyl-L-methionine = N(4)-methylcytidine(1402) in 16S rRNA + S-adenosyl-L-homocysteine + H(+). Its function is as follows. Specifically methylates the N4 position of cytidine in position 1402 (C1402) of 16S rRNA. This is Ribosomal RNA small subunit methyltransferase H from Pseudoalteromonas atlantica (strain T6c / ATCC BAA-1087).